We begin with the raw amino-acid sequence, 317 residues long: Small ribosomal subunit protein RACK1 (317 aa).

7 WD repeats span residues 13 to 44 (GHSG…IMWK), 61 to 91 (GHSH…RLWD), 103 to 133 (GHTK…KLWN), 146 to 178 (GHTE…KVWN), 190 to 220 (GHTG…MLWD), 231 to 260 (DSGD…KIWD), and 281 to 311 (AEPP…RVWQ).

Belongs to the WD repeat G protein beta family. Ribosomal protein RACK1 subfamily.

The protein localises to the cytoplasm. Functionally, involved in the recruitment, assembly and/or regulation of a variety of signaling molecules. Interacts with a wide variety of proteins and plays a role in many cellular processes. Required for VANGL2 membrane localization, inhibits Wnt signaling and regulates cellular polarization and oriented cell division during gastrulation. This Oreochromis niloticus (Nile tilapia) protein is Small ribosomal subunit protein RACK1 (gnb2l1).